Here is a 125-residue protein sequence, read N- to C-terminus: Apolipoprotein C-IV (125 aa).

The first 27 residues, 1-27 (MSLLRQRLQALPVLCLCVLVLACIGAC), serve as a signal peptide directing secretion.

It belongs to the apolipoprotein C4 family.

Its subcellular location is the secreted. May participate in lipoprotein metabolism. The protein is Apolipoprotein C-IV (APOC4) of Plecturocebus moloch (Dusky titi monkey).